The sequence spans 168 residues: Ecotin (168 aa).

A signal peptide spans 1–21 (MKRLSIAITSLLMAASASTIA). Cysteine 76 and cysteine 113 are disulfide-bonded.

The protein belongs to the protease inhibitor I11 (ecotin) family. As to quaternary structure, homodimer.

It is found in the periplasm. In terms of biological role, general inhibitor of pancreatic serine proteases: inhibits chymotrypsin, trypsin, elastases, factor X, kallikrein as well as a variety of other proteases. The chain is Ecotin from Yersinia enterocolitica serotype O:8 / biotype 1B (strain NCTC 13174 / 8081).